Here is a 792-residue protein sequence, read N- to C-terminus: Ribonucleoside-diphosphate reductase large subunit (792 aa).

Residues 1-92 form the ATP-cone domain; the sequence is MHVIKRDGRQ…VSNLHKEAKK (92 aa). Residues 5-6, 11-17, threonine 53, and aspartate 57 contribute to the ATP site; these read KR and ERVMFDK. Residue lysine 17 is modified to N6-acetyllysine. Residues serine 202 and serine 217 each coordinate GDP. Cysteine 218 and cysteine 444 form a disulfide bridge. DTTP contacts are provided by residues 226–228, lysine 243, arginine 256, and 263–264; these read DSI and AG. The residue at position 376 (lysine 376) is an N6-acetyllysine. Serine 427 serves as the catalytic Proton acceptor. Residue cysteine 429 is the Cysteine radical intermediate of the active site. Residues glutamate 431 and 604–607 each bind GDP; that span reads TAST. Catalysis depends on glutamate 431, which acts as the Proton acceptor. Threonine 751 is modified (phosphothreonine).

It belongs to the ribonucleoside diphosphate reductase large chain family. Heterodimer of a large and a small subunit. Interacts with RRM2B. Interacts with AHCYL1 which inhibits its activity.

Its subcellular location is the cytoplasm. It catalyses the reaction a 2'-deoxyribonucleoside 5'-diphosphate + [thioredoxin]-disulfide + H2O = a ribonucleoside 5'-diphosphate + [thioredoxin]-dithiol. With respect to regulation, under complex allosteric control mediated by deoxynucleoside triphosphates and ATP binding to separate specificity and activation sites on the M1 subunit. The type of nucleotide bound at the specificity site determines substrate preference. It seems probable that ATP makes the enzyme reduce CDP and UDP, dGTP favors ADP reduction and dTTP favors GDP reduction. Stimulated by ATP and inhibited by dATP binding to the activity site, the dATP inhibition is mediated by AHCYL1 which stabilizes dATP in the site. Its function is as follows. Provides the precursors necessary for DNA synthesis. Catalyzes the biosynthesis of deoxyribonucleotides from the corresponding ribonucleotides. The sequence is that of Ribonucleoside-diphosphate reductase large subunit (RRM1) from Pongo abelii (Sumatran orangutan).